The sequence spans 1547 residues: Transposon Ty3-G Gag-Pol polyprotein (1547 aa).

The residue at position 2 (S2) is an N-acetylserine. A CCHC-type zinc finger spans residues 265-282 (RLCFYCKKEGHRLNECRA). D336 (for protease activity; shared with dimeric partner) is an active-site residue. A Reverse transcriptase domain is found at 620 to 797 (LDNKFIVPSK…EETEFLGYSI (178 aa)). Mg(2+)-binding residues include D686, D748, D749, D893, E936, and D961. Residues 893–1011 (DASKDGIGAV…VADAISRAVY (119 aa)) enclose the RNase H Ty3/gyspy-type domain. The integrase-type zinc finger-like stretch occupies residues 1106 to 1145 (HTLFGGHFGVTVTLAKISPIYYWPKLQHSIIQYIRTCVQC). An Integrase catalytic domain is found at 1159–1324 (LQPLPIAEGR…SPFEIDLGYL (166 aa)). Mg(2+)-binding residues include D1175 and D1236.

The protease is a homodimer, whose active site consists of two apposed aspartic acid residues. In terms of processing, initially, virus-like particles (VLPs) are composed of the structural unprocessed proteins Gag and Gag-Pol, and also contain the host initiator methionine tRNA (tRNA(i)-Met) which serves as a primer for minus-strand DNA synthesis, and a dimer of genomic Ty RNA. Processing of the polyproteins occurs within the particle and proceeds by an ordered pathway, called maturation. First, the protease (PR) is released by autocatalytic cleavage of the Gag-Pol polyprotein, and this cleavage is a prerequisite for subsequent processing at the remaining sites to release the mature structural and catalytic proteins. Maturation takes place prior to the RT reaction and is required to produce transposition-competent VLPs.

The protein resides in the cytoplasm. It is found in the nucleus. The catalysed reaction is DNA(n) + a 2'-deoxyribonucleoside 5'-triphosphate = DNA(n+1) + diphosphate. The enzyme catalyses Endonucleolytic cleavage to 5'-phosphomonoester.. Functionally, capsid protein (CA) is the structural component of the virus-like particle (VLP), forming the shell that encapsulates the genomic RNA-nucleocapsid complex. In terms of biological role, nucleocapsid protein p11 (NC) forms the nucleocore that coats the retro-elements dimeric RNA. Binds these RNAs through its zinc fingers. Promotes primer tRNA(i)-Met annealing to the multipartite primer-binding site (PBS), dimerization of Ty3 RNA and initiation of reverse transcription. The aspartyl protease (PR) mediates the proteolytic cleavages of the Gag and Gag-Pol polyproteins after assembly of the VLP. Its function is as follows. Reverse transcriptase/ribonuclease H (RT) is a multifunctional enzyme that catalyzes the conversion of the retro-elements RNA genome into dsDNA within the VLP. The enzyme displays a DNA polymerase activity that can copy either DNA or RNA templates, and a ribonuclease H (RNase H) activity that cleaves the RNA strand of RNA-DNA heteroduplexes during plus-strand synthesis and hydrolyzes RNA primers. The conversion leads to a linear dsDNA copy of the retrotransposon that includes long terminal repeats (LTRs) at both ends. Functionally, integrase (IN) targets the VLP to the nucleus, where a subparticle preintegration complex (PIC) containing at least integrase and the newly synthesized dsDNA copy of the retrotransposon must transit the nuclear membrane. Once in the nucleus, integrase performs the integration of the dsDNA into the host genome. The chain is Transposon Ty3-G Gag-Pol polyprotein (TY3B-G) from Saccharomyces cerevisiae (strain ATCC 204508 / S288c) (Baker's yeast).